A 152-amino-acid chain; its full sequence is MENLIVAISNFPAVLPIGLSFLKRDFITFGTITFVSIASFISHLIENHKHGMPGIGFSQQTSYIWNRFDVLGCILSVARFSYLYYNRHGLTVVPIVNNKWLFAMTIPVFILLRVSEYDKYNPNLKTRYIITHCMWHAGIFGLMYYFLKNIVY.

4 helical membrane-spanning segments follow: residues 2–22, 26–46, 92–112, and 128–148; these read ENLI…LSFL, FITF…HLIE, VVPI…FILL, and YIIT…YFLK.

It localises to the membrane. This is an uncharacterized protein from Acanthamoeba polyphaga mimivirus (APMV).